A 470-amino-acid polypeptide reads, in one-letter code: Cysteine--tRNA ligase 1 (470 aa).

Residue cysteine 29 coordinates Zn(2+). Residues 31–41 (PTVYDDAHIGN) carry the 'HIGH' region motif. Zn(2+) contacts are provided by cysteine 221, histidine 246, and glutamate 250. The 'KMSKS' region signature appears at 279–283 (KMSKS). Lysine 282 contacts ATP.

It belongs to the class-I aminoacyl-tRNA synthetase family. Monomer. Zn(2+) is required as a cofactor.

The protein localises to the cytoplasm. It carries out the reaction tRNA(Cys) + L-cysteine + ATP = L-cysteinyl-tRNA(Cys) + AMP + diphosphate. The sequence is that of Cysteine--tRNA ligase 1 from Burkholderia lata (strain ATCC 17760 / DSM 23089 / LMG 22485 / NCIMB 9086 / R18194 / 383).